Consider the following 121-residue polypeptide: Spermidine export protein MdtJ (121 aa).

Met1 is a topological domain (cytoplasmic). Residues 2 to 22 (YIYWILLGLAVATEITGTLSM) form a helical membrane-spanning segment. Over 23–31 (KWASVSEGN) the chain is Periplasmic. The chain crosses the membrane as a helical span at residues 32-52 (GGFILMLVMISLSYIFLSFAV). Residues 53 to 54 (KK) are Cytoplasmic-facing. Residues 55 to 75 (IALGVAYALWEGIGILFITLF) traverse the membrane as a helical segment. Over 76 to 81 (SVLLFD) the chain is Periplasmic. The chain crosses the membrane as a helical span at residues 82–102 (ESLSLMKIAGLTTLVAGIVLI). At 103–121 (KSGTRKARKPELEVNHGAV) the chain is on the cytoplasmic side.

It belongs to the drug/metabolite transporter (DMT) superfamily. Small multidrug resistance (SMR) (TC 2.A.7.1) family. MdtJ subfamily. As to quaternary structure, forms a complex with MdtI.

It localises to the cell inner membrane. Catalyzes the excretion of spermidine. The polypeptide is Spermidine export protein MdtJ (mdtJ) (Escherichia coli O6:H1 (strain CFT073 / ATCC 700928 / UPEC)).